Here is a 35-residue protein sequence, read N- to C-terminus: Cecropin-A (35 aa).

Position 35 is a leucine amide (leucine 35).

As to quaternary structure, monomer. Hemolymph.

It is found in the secreted. In terms of biological role, cecropins have lytic and antibacterial activity against several Gram-positive and Gram-negative bacteria. Also has activity against fungi. This chain is Cecropin-A, found in Heliothis virescens (Tobacco budworm moth).